The following is a 605-amino-acid chain: Branchpoint-bridging protein (605 aa).

2 disordered regions span residues 1–75 (MSST…GENK) and 117–139 (VPPE…KRTN). A KH domain is found at 184–264 (YIPVNEYPDI…EKIARAVQLV (81 aa)). The tract at residues 294–319 (GTLRDDENYGGAPQSSSGDEMDDRNK) is disordered. The CCHC-type zinc-finger motif lies at 328-345 (IVCHICGSKGHFARDCLE). The span at 376–392 (ASQQQSIAQNPNTNNVS) shows a compositional bias: polar residues. Positions 376 to 605 (ASQQQSIAQN…PPPGVIGPPK (230 aa)) are disordered. Over residues 411 to 424 (PMSERGGSFDRFDR) the composition is skewed to basic and acidic residues. A compositionally biased stretch (polar residues) spans 428–445 (NQSNQREPQQQSHQQNMH). Positions 446–466 (NTNGNNYDRYDRNFNNSSNSS) are enriched in low complexity. The span at 468–484 (ELPPWHRPTPPSQPAAP) shows a compositional bias: pro residues. Residues 499–510 (SVQQSMQQSPWN) show a composition bias toward polar residues. Composition is skewed to pro residues over residues 561–581 (SVPP…PPGV) and 591–605 (RHPP…GPPK).

Belongs to the BBP/SF1 family.

The protein resides in the nucleus. Necessary for the splicing of pre-mRNA. Has a role in the recognition of the branch site (5'-UACUAAC-3'), the pyrimidine tract and the 3'-splice site at the 3'-end of introns. The protein is Branchpoint-bridging protein (BBP) of Yarrowia lipolytica (strain CLIB 122 / E 150) (Yeast).